Reading from the N-terminus, the 290-residue chain is MEGIILKGIGGFYYVKTEERVYECKARGKFRNKKLTPMVGDRVIITPNDNNYGAIEEICTRDNYLIRPQVANISQAFIVFALKNPDVNLDLLNKFLIQCELKNIKSIVCFNKIDLYGDYENHEAVKMVSDAGYDYIFLKAKEETNLDELKSKLKGNINVFCGPSGVGKSTILNKLVGKEVMETGIISERLKRGKHTTRHSELVEVNNGFVVDTPGFSTLDLKFDSKEELKDYFREFYEYKDQCKFNGCLHHKEPKCGVKDAVNNEEINKDRYEFYVKTLEEIIQGGRNKW.

One can recognise a CP-type G domain in the interval 62–219 (DNYLIRPQVA…VVDTPGFSTL (158 aa)). GTP is bound by residues 111–114 (NKID) and 162–170 (GPSGVGKST). Residues Cys-243, Cys-248, His-250, and Cys-256 each contribute to the Zn(2+) site.

The protein belongs to the TRAFAC class YlqF/YawG GTPase family. RsgA subfamily. In terms of assembly, monomer. Associates with 30S ribosomal subunit, binds 16S rRNA. It depends on Zn(2+) as a cofactor.

The protein localises to the cytoplasm. Its function is as follows. One of several proteins that assist in the late maturation steps of the functional core of the 30S ribosomal subunit. Helps release RbfA from mature subunits. May play a role in the assembly of ribosomal proteins into the subunit. Circularly permuted GTPase that catalyzes slow GTP hydrolysis, GTPase activity is stimulated by the 30S ribosomal subunit. The polypeptide is Small ribosomal subunit biogenesis GTPase RsgA (Clostridium novyi (strain NT)).